Reading from the N-terminus, the 110-residue chain is Phosphoribosyl-AMP cyclohydrolase (110 aa).

Aspartate 80 is a binding site for Mg(2+). Cysteine 81 lines the Zn(2+) pocket. Residues aspartate 82 and aspartate 84 each contribute to the Mg(2+) site. Zn(2+) contacts are provided by cysteine 97 and cysteine 104.

This sequence belongs to the PRA-CH family. In terms of assembly, homodimer. It depends on Mg(2+) as a cofactor. The cofactor is Zn(2+).

It is found in the cytoplasm. The catalysed reaction is 1-(5-phospho-beta-D-ribosyl)-5'-AMP + H2O = 1-(5-phospho-beta-D-ribosyl)-5-[(5-phospho-beta-D-ribosylamino)methylideneamino]imidazole-4-carboxamide. It functions in the pathway amino-acid biosynthesis; L-histidine biosynthesis; L-histidine from 5-phospho-alpha-D-ribose 1-diphosphate: step 3/9. Functionally, catalyzes the hydrolysis of the adenine ring of phosphoribosyl-AMP. This chain is Phosphoribosyl-AMP cyclohydrolase, found in Clostridium botulinum (strain ATCC 19397 / Type A).